The sequence spans 72 residues: Translation initiation factor IF-1 (72 aa).

An S1-like domain is found at 1 to 72; the sequence is MAKEESIEVE…SKGRITYRYK (72 aa).

It belongs to the IF-1 family. Component of the 30S ribosomal translation pre-initiation complex which assembles on the 30S ribosome in the order IF-2 and IF-3, IF-1 and N-formylmethionyl-tRNA(fMet); mRNA recruitment can occur at any time during PIC assembly.

It localises to the cytoplasm. Its function is as follows. One of the essential components for the initiation of protein synthesis. Stabilizes the binding of IF-2 and IF-3 on the 30S subunit to which N-formylmethionyl-tRNA(fMet) subsequently binds. Helps modulate mRNA selection, yielding the 30S pre-initiation complex (PIC). Upon addition of the 50S ribosomal subunit IF-1, IF-2 and IF-3 are released leaving the mature 70S translation initiation complex. The chain is Translation initiation factor IF-1 from Chlorobaculum tepidum (strain ATCC 49652 / DSM 12025 / NBRC 103806 / TLS) (Chlorobium tepidum).